The following is an 81-amino-acid chain: Delta-conotoxin-like Ac6.3 (81 aa).

The N-terminal stretch at 1–22 (MKLTCVMIVAVLFLTAWTFVTA) is a signal peptide. A propeptide spanning residues 23-51 (DDSRNGLENLSPKARHEMKNPEASKSNKR) is cleaved from the precursor. 3 disulfides stabilise this stretch: Cys-54/Cys-69, Cys-61/Cys-73, and Cys-68/Cys-78.

This sequence belongs to the conotoxin O1 superfamily. In terms of tissue distribution, expressed by the venom duct.

It is found in the secreted. Functionally, delta-conotoxins bind to site 6 of voltage-gated sodium channels (Nav) and inhibit the inactivation process. The sequence is that of Delta-conotoxin-like Ac6.3 from Conus achatinus (Little frog cone).